We begin with the raw amino-acid sequence, 463 residues long: Cysteine--tRNA ligase (463 aa).

A Zn(2+)-binding site is contributed by C29. The short motif at 31–41 (ATPQTQPHIGH) is the 'HIGH' region element. Zn(2+) is bound by residues C212, H237, and E241. The 'KMSKS' region signature appears at 268–272 (KMSKS). K271 lines the ATP pocket.

This sequence belongs to the class-I aminoacyl-tRNA synthetase family. As to quaternary structure, monomer. Zn(2+) serves as cofactor.

Its subcellular location is the cytoplasm. The enzyme catalyses tRNA(Cys) + L-cysteine + ATP = L-cysteinyl-tRNA(Cys) + AMP + diphosphate. This Corynebacterium diphtheriae (strain ATCC 700971 / NCTC 13129 / Biotype gravis) protein is Cysteine--tRNA ligase.